Consider the following 337-residue polypeptide: Pyridoxal 5'-phosphate synthase subunit PdxS (337 aa).

Residue aspartate 65 coordinates D-ribose 5-phosphate. The active-site Schiff-base intermediate with D-ribose 5-phosphate is lysine 122. Glycine 194 serves as a coordination point for D-ribose 5-phosphate. Position 206 (lysine 206) interacts with D-glyceraldehyde 3-phosphate. D-ribose 5-phosphate-binding positions include glycine 255 and 276–277 (GS).

This sequence belongs to the PdxS/SNZ family. In terms of assembly, in the presence of PdxT, forms a dodecamer of heterodimers.

It catalyses the reaction aldehydo-D-ribose 5-phosphate + D-glyceraldehyde 3-phosphate + L-glutamine = pyridoxal 5'-phosphate + L-glutamate + phosphate + 3 H2O + H(+). It participates in cofactor biosynthesis; pyridoxal 5'-phosphate biosynthesis. Functionally, catalyzes the formation of pyridoxal 5'-phosphate from ribose 5-phosphate (RBP), glyceraldehyde 3-phosphate (G3P) and ammonia. The ammonia is provided by the PdxT subunit. Can also use ribulose 5-phosphate and dihydroxyacetone phosphate as substrates, resulting from enzyme-catalyzed isomerization of RBP and G3P, respectively. This is Pyridoxal 5'-phosphate synthase subunit PdxS from Metallosphaera sedula (strain ATCC 51363 / DSM 5348 / JCM 9185 / NBRC 15509 / TH2).